The primary structure comprises 178 residues: Prion-like protein doppel (178 aa).

The N-terminal stretch at 1-25 (MRKHLGGCWLAIVCILLFSQLCSVK) is a signal peptide. The segment at 27–50 (RGIKHRIKWNRKVLPSTSQVTEAR) is flexible tail. Residues 51-154 (TAEIRPGAFI…KHCDFWLERG (104 aa)) are globular. 2 cysteine pairs are disulfide-bonded: Cys-94–Cys-147 and Cys-108–Cys-142. N-linked (GlcNAc...) asparagine glycosylation is found at Asn-98 and Asn-110. A cu(2+) binding region spans residues 124–141 (KQDNKLYQRVLWQLIREL). Gly-154 carries GPI-anchor amidated glycine lipidation. Residues 155-178 (AGLRVTLDQPMMLCLLVFIWFIVK) constitute a propeptide, removed in mature form.

It belongs to the prion family. Post-translationally, N-glycosylated. O-glycosylated. As to expression, strongly expressed in testis. Detected at low levels in ovary, spleen, kidney and mammary gland.

It localises to the cell membrane. Required for normal acrosome reaction and for normal male fertility. Can bind Cu(2+). The chain is Prion-like protein doppel (PRND) from Bos taurus (Bovine).